We begin with the raw amino-acid sequence, 262 residues long: Pyridoxine 5'-phosphate synthase (262 aa).

Asn-6 lines the 3-amino-2-oxopropyl phosphate pocket. 8–9 (DH) lines the 1-deoxy-D-xylulose 5-phosphate pocket. A 3-amino-2-oxopropyl phosphate-binding site is contributed by Arg-17. His-43 serves as the catalytic Proton acceptor. 1-deoxy-D-xylulose 5-phosphate-binding residues include Arg-45 and His-50. Glu-70 (proton acceptor) is an active-site residue. A 1-deoxy-D-xylulose 5-phosphate-binding site is contributed by Thr-102. His-215 serves as the catalytic Proton donor. Residues Gly-216 and 237-238 (GH) each bind 3-amino-2-oxopropyl phosphate.

Belongs to the PNP synthase family. As to quaternary structure, homooctamer; tetramer of dimers.

It localises to the cytoplasm. It catalyses the reaction 3-amino-2-oxopropyl phosphate + 1-deoxy-D-xylulose 5-phosphate = pyridoxine 5'-phosphate + phosphate + 2 H2O + H(+). It participates in cofactor biosynthesis; pyridoxine 5'-phosphate biosynthesis; pyridoxine 5'-phosphate from D-erythrose 4-phosphate: step 5/5. Catalyzes the complicated ring closure reaction between the two acyclic compounds 1-deoxy-D-xylulose-5-phosphate (DXP) and 3-amino-2-oxopropyl phosphate (1-amino-acetone-3-phosphate or AAP) to form pyridoxine 5'-phosphate (PNP) and inorganic phosphate. The polypeptide is Pyridoxine 5'-phosphate synthase (Helicobacter pylori (strain HPAG1)).